The sequence spans 713 residues: Polyribonucleotide nucleotidyltransferase (713 aa).

The Mg(2+) site is built by aspartate 488 and aspartate 494. The KH domain maps to 555 to 614 (PQMEIIKVPTDKIRDVIGSGGKVIRGIVDETGAKVNIDDDGTVQISAMDRKSIDAAIKMI). The region spanning 624–692 (GEIYEGKVVS…ERGKVRLSMK (69 aa)) is the S1 motif domain.

It belongs to the polyribonucleotide nucleotidyltransferase family. Mg(2+) serves as cofactor.

It localises to the cytoplasm. It carries out the reaction RNA(n+1) + phosphate = RNA(n) + a ribonucleoside 5'-diphosphate. In terms of biological role, involved in mRNA degradation. Catalyzes the phosphorolysis of single-stranded polyribonucleotides processively in the 3'- to 5'-direction. The chain is Polyribonucleotide nucleotidyltransferase from Hyphomonas neptunium (strain ATCC 15444).